The sequence spans 955 residues: Thrombospondin-4 (955 aa).

An N-terminal signal peptide occupies residues 1 to 24 (MPRRKGLCLFLQMLLLHLYGVCQA). Positions 25–192 (QPNYQVFDLL…MDELKLVMGG (168 aa)) constitute a Laminin G-like domain. Positions 281–320 (PKPRCDATSCFRGVRCIDTEGGFQCGPCPEGYTGNGVICT) constitute an EGF-like 1 domain. Cystine bridges form between C285–C296, C290–C305, C308–C319, C325–C336, C330–C345, C348–C372, C378–C392, C386–C401, C404–C416, C422–C435, C429–C445, C447–C458, C474–C479, C484–C504, C520–C540, C543–C563, C579–C599, C602–C622, C640–C660, C680–C700, and C716–C937. Positions 321 to 358 (DVDECRLNPCFLGVRCINTSPGFKCESCPPGYTGSTIQ) constitute an EGF-like 2; calcium-binding domain. Positions 374-415 (DTNECENGRNGGCTSNSLCINTMGSFRCGGCKPGYVGDQIKG) constitute an EGF-like 3; calcium-binding domain. The 42-residue stretch at 418–459 (PEKSCRHGQNPCHASAQCSEEKDGDVTCTCSVGWAGNGYLCG) folds into the EGF-like 4 domain. TSP type-3 repeat units follow at residues 460–492 (KDTDIDGYPDEALPCPDKNCKKDNCVYVPNSGQ), 493–528 (EDTDKDNIGDACDEDADGDGILNEQDNCVLAANIDQ), 529–551 (KNSDQDIFGDACDNCRLTLNNDQ), 552–587 (RDTDNDGKGDACDDDMDGDGIKNILDNCQRVPNVDQ), 588–610 (KDKDGDGVGDICDSCPDIINPNQ), 611–648 (SDIDNDLVGDSCDTNQDSDGDGHQDSTDNCPTVINSNQ), 649–688 (LDTDKDGIGDECDDDDDNDGIPDTVPPGPDNCKLVPNPGQ), and 689–724 (EDDNNDGVGDVCEADFDQDTVIDRIDVCPENAEITL). A glycan (N-linked (GlcNAc...) asparagine) is linked at N609. The tract at residues 610-678 (QSDIDNDLVG…IPDTVPPGPD (69 aa)) is disordered. Over residues 637–649 (TDNCPTVINSNQL) the composition is skewed to polar residues. Residues 657-668 (GDECDDDDDNDG) show a composition bias toward acidic residues. The TSP C-terminal domain maps to 728-942 (RAYQTVVLDP…LKYRCNDTIP (215 aa)). The N-linked (GlcNAc...) asparagine glycan is linked to N938.

This sequence belongs to the thrombospondin family. Homotrimer; disulfide-linked.

Its subcellular location is the endoplasmic reticulum. It localises to the sarcoplasmic reticulum. The protein localises to the secreted. It is found in the extracellular space. The protein resides in the extracellular matrix. Adhesive glycoprotein that mediates cell-to-cell and cell-to-matrix interactions and may be involved in various processes including cellular proliferation, migration, adhesion and attachment. May play a role in ER stress response. May participate in the genesis and function of cardiac and skeletal muscle. The sequence is that of Thrombospondin-4 (thbs4) from Xenopus laevis (African clawed frog).